Here is a 282-residue protein sequence, read N- to C-terminus: Bifunctional protein FolD (282 aa).

NADP(+) is bound by residues 164-166, I189, and I230; that span reads GAS.

This sequence belongs to the tetrahydrofolate dehydrogenase/cyclohydrolase family. As to quaternary structure, homodimer.

The catalysed reaction is (6R)-5,10-methylene-5,6,7,8-tetrahydrofolate + NADP(+) = (6R)-5,10-methenyltetrahydrofolate + NADPH. It catalyses the reaction (6R)-5,10-methenyltetrahydrofolate + H2O = (6R)-10-formyltetrahydrofolate + H(+). It participates in one-carbon metabolism; tetrahydrofolate interconversion. Functionally, catalyzes the oxidation of 5,10-methylenetetrahydrofolate to 5,10-methenyltetrahydrofolate and then the hydrolysis of 5,10-methenyltetrahydrofolate to 10-formyltetrahydrofolate. This chain is Bifunctional protein FolD, found in Campylobacter jejuni subsp. jejuni serotype O:2 (strain ATCC 700819 / NCTC 11168).